The following is a 200-amino-acid chain: MAFELPALPYAHDALASLGMSKETLEYHHDLHHKAYVDNGNKLIAGTEWEGKSVEEIVKGTYCAGAVAQSGIFNNASQHWNHAQFWEMMGPGEDKKMPGALEKALVESFGSVAKFKEDFAAAGAGQFGSGWAWLVKDSDGALKITKTENGVNPLCFGQTALLGCDVWEHSYYIDFRNKRPAYLTNFLDKLVNWENVASRM.

Fe cation contacts are provided by His-28, His-82, Asp-165, and His-169.

This sequence belongs to the iron/manganese superoxide dismutase family. Homodimer. Requires Fe cation as cofactor.

The catalysed reaction is 2 superoxide + 2 H(+) = H2O2 + O2. Its function is as follows. Destroys superoxide anion radicals which are normally produced within the cells and which are toxic to biological systems. The chain is Superoxide dismutase [Fe] (sodB) from Rhodobacter capsulatus (Rhodopseudomonas capsulata).